The chain runs to 285 residues: GPN-loop GTPase 3 (285 aa).

GTP is bound at residue 13–18 (GSGKST). The Gly-Pro-Asn (GPN)-loop; involved in dimer interface motif lies at 72-74 (GPN). 174 to 177 (TKMD) lines the GTP pocket. The segment at 262–285 (EPKEVDEEPSNSNFDAFFQDTADS) is disordered.

It belongs to the GPN-loop GTPase family. In terms of assembly, heterodimer with gpn1. Binds to RNA polymerase II (RNAPII).

Functionally, small GTPase required for proper localization of RNA polymerase II (RNAPII). May act at an RNAP assembly step prior to nuclear import. The chain is GPN-loop GTPase 3 from Danio rerio (Zebrafish).